The sequence spans 178 residues: Co-chaperone protein p23-1 (178 aa).

One can recognise a CS domain in the interval 2 to 91; the sequence is SRHPTVKWAQ…AESKWWNRLT (90 aa). Acidic residues-rich tracts occupy residues 112–126 and 136–155; these read DDED…DFGD and DTDE…EGET. Positions 112–178 are disordered; it reads DDEDKGGEGD…DEEGVNAKKD (67 aa). Basic and acidic residues predominate over residues 157-178; it reads AETKEKKIDGEKDEEGVNAKKD.

This sequence belongs to the p23/wos2 family. Interacts with HSP90 in an ATP-dependent manner.

Functionally, acts as a co-chaperone for HSP90. This chain is Co-chaperone protein p23-1, found in Brassica napus (Rape).